Here is a 62-residue protein sequence, read N- to C-terminus: Potassium channel toxin kappa-KTx 1.4 (62 aa).

Positions 1-26 (MKSCLINVSLLILLLLPILGYASVNA) are cleaved as a signal peptide. A propeptide spanning residues 27–38 (ESIDGENDFEEE) is cleaved from the precursor. 2 disulfide bridges follow: cysteine 43–cysteine 61 and cysteine 47–cysteine 57.

It belongs to the short scorpion toxin superfamily. Potassium channel inhibitor kappa-KTx family. Kappa-KTx 1 subfamily. In terms of tissue distribution, expressed by the venom gland.

The protein resides in the secreted. In terms of biological role, shows structural homology with WaTx suggesting that it acts as a cell-penetrating peptide (CPP) with defensive purpose that induces pain by specifically activating mammalian sensory neuron TRPA1 channels. Has no effect on the voltage-gated potassium channels tested. The protein is Potassium channel toxin kappa-KTx 1.4 of Heterometrus petersii (Asian forest scorpion).